Consider the following 1133-residue polypeptide: Protein TOPLESS-RELATED PROTEIN 2 (1133 aa).

One can recognise a LisH domain in the interval 4–36 (LSRELVFLILQFLDEEKFKETVHKLEQESAFYF). Residues 34–92 (FYFNMKHFEDLVQGGEWDEVEKYLSGFTKVEDNRYSMKIFFEIRKQKYLEALDRHDRAK) enclose the CTLH domain. WD repeat units lie at residues 344–384 (NQGS…RIAH), 451–492 (AHIG…KQYT), 495–536 (GHEA…SRVD), 539–582 (APGH…IKRT), 586–625 (FRKRSLGVVQFDTTRNRFLAAGDEFVVKFWDMDNTNILTT), 630–669 (GGLPASPRLRFNREGSLLAVTANENGIKILANTDGQRLLR), 771–810 (ATSSKVVRLLYTNNGVALLALGSNAVHKLWKWQRTDRNPN), 838–876 (NPEEATACIALSKNDSYVMSASGGKVSLFNMMTFKVMTT), 879–919 (APPP…VKSK), 922–961 (GHSKKITGLAFSQSMNMLVSSGADAQLCAWSIDGWEKKKS), 970–1011 (RSGA…RSWS), and 1015–1054 (ALPAPISSAIYSCDGLLIYAGFCDGAIGVFEAESLRLRCR). The segment at 1102 to 1133 (DSDPKWGVAPPQDNGTHPTISAAPAAANKPEV) is disordered.

Tetramer. Interacts with D53, probably via the EAR motifs. Binds to AP2-1/TOE1, AP2-3/SNB and AP2-2/IDS1. Interacts with WOX1. Interacts with MOF1. As to expression, expressed in stems and panicles. Detected in roots, seeds, leaves and sheath. Expressed in the meristem and lateral organ primordia.

It localises to the nucleus. Functionally, transcriptional corepressor involved in branch formation regulation, presumably by suppressing primary branch formation and promoting secondary branch formation. Required for the cell elongation in the first internode and pollen development. Probable downstream regulator of strigolactones signaling important in axillary meristem maintenance. Acts in auxin signaling and is associated with the regulation of histone deacetylation. Essential for the function of miR172 microRNA and its target genes in regulating panicle development. This is Protein TOPLESS-RELATED PROTEIN 2 from Oryza sativa subsp. japonica (Rice).